Here is a 343-residue protein sequence, read N- to C-terminus: Cytoplasmic tRNA 2-thiolation protein 1 (343 aa).

This sequence belongs to the TtcA family. CTU1/NCS6/ATPBD3 subfamily.

Its subcellular location is the cytoplasm. It participates in tRNA modification; 5-methoxycarbonylmethyl-2-thiouridine-tRNA biosynthesis. Its function is as follows. Plays a central role in 2-thiolation of mcm(5)S(2)U at tRNA wobble positions of tRNA(Lys), tRNA(Glu) and tRNA(Gln). Directly binds tRNAs and probably acts by catalyzing adenylation of tRNAs, an intermediate required for 2-thiolation. It is unclear whether it acts as a sulfurtransferase that transfers sulfur from thiocarboxylated URM1 onto the uridine of tRNAs at wobble position. The sequence is that of Cytoplasmic tRNA 2-thiolation protein 1 from Drosophila erecta (Fruit fly).